Consider the following 401-residue polypeptide: Inactive (1R,4R,5S)-(-)-guaia-6,10(14)-diene synthase (401 aa).

Residues 1 to 20 form a disordered region; the sequence is MVKFDSGSESEMTNGDELHI. Residues D134 and E139 each contribute to the Mg(2+) site. The short motif at 134–138 is the DDXXD motif element; sequence DDQFD. R242 contributes to the substrate binding site. S292 serves as a coordination point for Mg(2+). K295 provides a ligand contact to substrate. Mg(2+) is bound at residue D296. Residue 375 to 376 participates in substrate binding; the sequence is RY.

It belongs to the terpene synthase family. The cofactor is Mg(2+).

This chain is Inactive (1R,4R,5S)-(-)-guaia-6,10(14)-diene synthase, found in Gibberella fujikuroi (strain CBS 195.34 / IMI 58289 / NRRL A-6831) (Bakanae and foot rot disease fungus).